Reading from the N-terminus, the 622-residue chain is 3-(3-hydroxy-phenyl)propionate/3-hydroxycinnamic acid hydroxylase (622 aa).

FAD contacts are provided by residues 20–49 (DVAI…VLEK) and 288–298 (FRVDRVLLAGD).

This sequence belongs to the PheA/TfdB FAD monooxygenase family. The cofactor is FAD.

It carries out the reaction 3-(3-hydroxyphenyl)propanoate + NADH + O2 + H(+) = 3-(2,3-dihydroxyphenyl)propanoate + NAD(+) + H2O. It catalyses the reaction (2E)-3-(3-hydroxyphenyl)prop-2-enoate + NADH + O2 + H(+) = (2E)-3-(2,3-dihydroxyphenyl)prop-2-enoate + NAD(+) + H2O. It functions in the pathway aromatic compound metabolism; 3-phenylpropanoate degradation. Catalyzes the insertion of one atom of molecular oxygen into position 2 of the phenyl ring of 3-(3-hydroxyphenyl)propionate (3-HPP) and hydroxycinnamic acid (3HCI). The sequence is that of 3-(3-hydroxy-phenyl)propionate/3-hydroxycinnamic acid hydroxylase from Paraburkholderia xenovorans (strain LB400).